A 499-amino-acid polypeptide reads, in one-letter code: Flotillin-like protein 2 (499 aa).

Cysteine 37 is lipidated: S-palmitoyl cysteine. Residues 243–319 are a coiled coil; the sequence is LREEAKVKAE…LRLTEKLKAE (77 aa).

This sequence belongs to the band 7/mec-2 family. Flotillin subfamily. Post-translationally, may be palmitoylated.

The protein localises to the cell membrane. It is found in the membrane. The protein resides in the caveola. Functionally, may act as a scaffolding protein within caveolar membranes, functionally participating in formation of caveolae or caveolae-like vesicles. This Oryza sativa subsp. japonica (Rice) protein is Flotillin-like protein 2 (FLOT2).